Reading from the N-terminus, the 784-residue chain is ATP-dependent 6-phosphofructokinase, platelet type (784 aa).

Met1 is subject to N-acetylmethionine. The interval 1 to 398 is N-terminal catalytic PFK domain 1; it reads MSDLDSSSSS…NLNTYKRLAI (398 aa). Phosphoserine is present on residues Ser2, Ser6, and Ser20. ATP contacts are provided by residues Gly33, 96–97, and 126–129; these read RC and GDGS. Asp127 is a Mg(2+) binding site. Ser141 carries the phosphoserine modification. Substrate is bound by residues 172-174, Arg209, 216-218, Glu272, Arg300, and 306-309; these read SID, MGR, and HVQR. Catalysis depends on Asp174, which acts as the Proton acceptor. Lys394 is modified (N6-acetyllysine). The segment at 399-410 is interdomain linker; the sequence is KLPDEKIVKSNC. The interval 411–784 is C-terminal regulatory PFK domain 2; sequence NVAVINVGAP…LESLQHHEEL (374 aa). Arg480 contributes to the beta-D-fructose 2,6-bisphosphate binding site. Position 485 is an N6-acetyllysine (Lys485). Beta-D-fructose 2,6-bisphosphate is bound by residues 537–541, Arg575, 582–584, and Glu638; these read TVSNN and MGG. Ser539 is a glycosylation site (O-linked (GlcNAc) serine). Tyr650 is modified (phosphotyrosine). Beta-D-fructose 2,6-bisphosphate-binding positions include Arg664 and 670 to 673; that span reads HMQQ. Lys687 bears the N6-acetyllysine mark. Arg743 contacts beta-D-fructose 2,6-bisphosphate.

Belongs to the phosphofructokinase type A (PFKA) family. ATP-dependent PFK group I subfamily. Eukaryotic two domain clade 'E' sub-subfamily. Homo- and heterotetramers. Phosphofructokinase (PFK) enzyme functions as a tetramer composed of different combinations of 3 types of subunits, called PFKM (M), PFKL (L) and PFKP (P). The composition of the PFK tetramer differs according to the tissue type it is present in. The kinetic and regulatory properties of the tetrameric enzyme are dependent on the subunit composition, hence can vary across tissues. Interacts with ATG4B; promoting phosphorylation of ATG4B. It depends on Mg(2+) as a cofactor. In terms of processing, glcNAcylation decreases enzyme activity. In terms of tissue distribution, expression is constant during tumor growth and markedly decreases when cell proliferation stops.

It localises to the cytoplasm. It catalyses the reaction beta-D-fructose 6-phosphate + ATP = beta-D-fructose 1,6-bisphosphate + ADP + H(+). Its pathway is carbohydrate degradation; glycolysis; D-glyceraldehyde 3-phosphate and glycerone phosphate from D-glucose: step 3/4. Allosterically activated by ADP, AMP, or fructose 2,6-bisphosphate, and allosterically inhibited by ATP or citrate. Catalyzes the phosphorylation of D-fructose 6-phosphate to fructose 1,6-bisphosphate by ATP, the first committing step of glycolysis. The polypeptide is ATP-dependent 6-phosphofructokinase, platelet type (Pfkp) (Mus musculus (Mouse)).